A 372-amino-acid polypeptide reads, in one-letter code: tRNA-specific 2-thiouridylase MnmA (372 aa).

ATP is bound by residues 16–23 (GMSGGVDS) and methionine 42. The interval 102-104 (NPD) is interaction with target base in tRNA. Cysteine 107 (nucleophile) is an active-site residue. A disulfide bond links cysteine 107 and cysteine 205. Glycine 132 lines the ATP pocket. The interaction with tRNA stretch occupies residues 155–157 (KDQ). Catalysis depends on cysteine 205, which acts as the Cysteine persulfide intermediate. Positions 317–318 (RY) are interaction with tRNA.

The protein belongs to the MnmA/TRMU family.

Its subcellular location is the cytoplasm. The enzyme catalyses S-sulfanyl-L-cysteinyl-[protein] + uridine(34) in tRNA + AH2 + ATP = 2-thiouridine(34) in tRNA + L-cysteinyl-[protein] + A + AMP + diphosphate + H(+). Catalyzes the 2-thiolation of uridine at the wobble position (U34) of tRNA, leading to the formation of s(2)U34. This is tRNA-specific 2-thiouridylase MnmA from Shewanella sp. (strain MR-7).